We begin with the raw amino-acid sequence, 142 residues long: Hemoglobin subunit alpha (142 aa).

Residues 2-142 (VLSPADKSNV…VSTVLTSKYR (141 aa)) enclose the Globin domain. At S4 the chain carries Phosphoserine. N6-succinyllysine occurs at positions 8 and 12. K17 is modified (N6-acetyllysine; alternate). K17 is modified (N6-succinyllysine; alternate). Phosphotyrosine is present on Y25. At S36 the chain carries Phosphoserine. K41 bears the N6-succinyllysine mark. S50 is modified (phosphoserine). An O2-binding site is contributed by H59. H88 lines the heme b pocket. S103 bears the Phosphoserine mark. T109 carries the post-translational modification Phosphothreonine. A phosphoserine mark is found at S125 and S132. 2 positions are modified to phosphothreonine: T135 and T138. S139 is subject to Phosphoserine.

Belongs to the globin family. As to quaternary structure, heterotetramer of two alpha chains and two beta chains. In terms of tissue distribution, red blood cells.

In terms of biological role, involved in oxygen transport from the lung to the various peripheral tissues. Hemopressin acts as an antagonist peptide of the cannabinoid receptor CNR1. Hemopressin-binding efficiently blocks cannabinoid receptor CNR1 and subsequent signaling. The polypeptide is Hemoglobin subunit alpha (HBA) (Chlorocebus aethiops (Green monkey)).